Reading from the N-terminus, the 572-residue chain is Proline--tRNA ligase (572 aa).

Belongs to the class-II aminoacyl-tRNA synthetase family. ProS type 1 subfamily. In terms of assembly, homodimer.

The protein resides in the cytoplasm. It carries out the reaction tRNA(Pro) + L-proline + ATP = L-prolyl-tRNA(Pro) + AMP + diphosphate. Functionally, catalyzes the attachment of proline to tRNA(Pro) in a two-step reaction: proline is first activated by ATP to form Pro-AMP and then transferred to the acceptor end of tRNA(Pro). As ProRS can inadvertently accommodate and process non-cognate amino acids such as alanine and cysteine, to avoid such errors it has two additional distinct editing activities against alanine. One activity is designated as 'pretransfer' editing and involves the tRNA(Pro)-independent hydrolysis of activated Ala-AMP. The other activity is designated 'posttransfer' editing and involves deacylation of mischarged Ala-tRNA(Pro). The misacylated Cys-tRNA(Pro) is not edited by ProRS. This is Proline--tRNA ligase from Escherichia coli O127:H6 (strain E2348/69 / EPEC).